Reading from the N-terminus, the 578-residue chain is 2-succinyl-5-enolpyruvyl-6-hydroxy-3-cyclohexene-1-carboxylate synthase (578 aa).

Belongs to the TPP enzyme family. MenD subfamily. As to quaternary structure, homodimer. It depends on Mg(2+) as a cofactor. The cofactor is Mn(2+). Thiamine diphosphate is required as a cofactor.

It carries out the reaction isochorismate + 2-oxoglutarate + H(+) = 5-enolpyruvoyl-6-hydroxy-2-succinyl-cyclohex-3-ene-1-carboxylate + CO2. The protein operates within quinol/quinone metabolism; 1,4-dihydroxy-2-naphthoate biosynthesis; 1,4-dihydroxy-2-naphthoate from chorismate: step 2/7. It functions in the pathway quinol/quinone metabolism; menaquinone biosynthesis. Functionally, catalyzes the thiamine diphosphate-dependent decarboxylation of 2-oxoglutarate and the subsequent addition of the resulting succinic semialdehyde-thiamine pyrophosphate anion to isochorismate to yield 2-succinyl-5-enolpyruvyl-6-hydroxy-3-cyclohexene-1-carboxylate (SEPHCHC). This is 2-succinyl-5-enolpyruvyl-6-hydroxy-3-cyclohexene-1-carboxylate synthase from Bacillus velezensis (strain DSM 23117 / BGSC 10A6 / LMG 26770 / FZB42) (Bacillus amyloliquefaciens subsp. plantarum).